Here is a 293-residue protein sequence, read N- to C-terminus: Pyridoxal 5'-phosphate synthase subunit PdxS (293 aa).

Aspartate 23 provides a ligand contact to D-ribose 5-phosphate. Lysine 80 serves as the catalytic Schiff-base intermediate with D-ribose 5-phosphate. Glycine 152 contributes to the D-ribose 5-phosphate binding site. Arginine 164 is a binding site for D-glyceraldehyde 3-phosphate. Residues glycine 213 and 234 to 235 contribute to the D-ribose 5-phosphate site; that span reads GS.

It belongs to the PdxS/SNZ family. As to quaternary structure, in the presence of PdxT, forms a dodecamer of heterodimers.

The catalysed reaction is aldehydo-D-ribose 5-phosphate + D-glyceraldehyde 3-phosphate + L-glutamine = pyridoxal 5'-phosphate + L-glutamate + phosphate + 3 H2O + H(+). It participates in cofactor biosynthesis; pyridoxal 5'-phosphate biosynthesis. Functionally, catalyzes the formation of pyridoxal 5'-phosphate from ribose 5-phosphate (RBP), glyceraldehyde 3-phosphate (G3P) and ammonia. The ammonia is provided by the PdxT subunit. Can also use ribulose 5-phosphate and dihydroxyacetone phosphate as substrates, resulting from enzyme-catalyzed isomerization of RBP and G3P, respectively. This Roseiflexus sp. (strain RS-1) protein is Pyridoxal 5'-phosphate synthase subunit PdxS.